The chain runs to 307 residues: Ornithine carbamoyltransferase (307 aa).

Carbamoyl phosphate-binding positions include 50 to 53, Gln77, Arg101, and 128 to 131; these read STRT and HPCQ. Residues Asn160, Asp224, and 228 to 229 each bind L-ornithine; that span reads SM. Residues 264–265 and Arg292 contribute to the carbamoyl phosphate site; that span reads CL.

This sequence belongs to the aspartate/ornithine carbamoyltransferase superfamily. OTCase family. In terms of assembly, homotrimer.

It is found in the cytoplasm. The enzyme catalyses carbamoyl phosphate + L-ornithine = L-citrulline + phosphate + H(+). It functions in the pathway amino-acid biosynthesis; L-arginine biosynthesis; L-arginine from L-ornithine and carbamoyl phosphate: step 1/3. Its function is as follows. Reversibly catalyzes the transfer of the carbamoyl group from carbamoyl phosphate (CP) to the N(epsilon) atom of ornithine (ORN) to produce L-citrulline, which is a substrate for argininosuccinate synthetase, the enzyme involved in the final step in arginine biosynthesis. This is Ornithine carbamoyltransferase (argF) from Mycobacterium bovis (strain ATCC BAA-935 / AF2122/97).